The chain runs to 327 residues: GTPase Obg (327 aa).

The Obg domain maps to 1-159 (MQFIDQANII…WEVQLELKLL (159 aa)). Positions 160–327 (AEVGIIGLPN…SLLSEVWKRI (168 aa)) constitute an OBG-type G domain. ATP is bound by residues 166–173 (GLPNAGKS), 191–195 (FTTLI), 213–216 (DIPG), 280–283 (NKME), and 309–311 (SSS). Positions 173 and 193 each coordinate Mg(2+).

Belongs to the TRAFAC class OBG-HflX-like GTPase superfamily. OBG GTPase family. In terms of assembly, monomer. Mg(2+) is required as a cofactor.

It localises to the cytoplasm. Its function is as follows. An essential GTPase which binds GTP, GDP and possibly (p)ppGpp with moderate affinity, with high nucleotide exchange rates and a fairly low GTP hydrolysis rate. Plays a role in control of the cell cycle, stress response, ribosome biogenesis and in those bacteria that undergo differentiation, in morphogenesis control. In Prochlorococcus marinus (strain MIT 9301), this protein is GTPase Obg.